Reading from the N-terminus, the 305-residue chain is Mitochondrial thiamine pyrophosphate carrier 1 (305 aa).

Helical transmembrane passes span 16–32 (VSPY…GAVA), 84–100 (ILYV…YSSI), 122–142 (LVSG…FDLL), 169–193 (GFTG…LMFW), 213–229 (ICGF…TFPL), and 270–287 (GFGI…VSLF). 3 Solcar repeats span residues 16-103 (VSPY…ISRW), 116-201 (PSSA…VRET), and 206-295 (DIPF…SLAA).

This sequence belongs to the mitochondrial carrier (TC 2.A.29) family.

Its subcellular location is the mitochondrion inner membrane. In terms of biological role, mitochondrial transporter that mediates uptake of thiamine pyrophosphate (ThPP) into mitochondria. This chain is Mitochondrial thiamine pyrophosphate carrier 1 (TPC1), found in Scheffersomyces stipitis (strain ATCC 58785 / CBS 6054 / NBRC 10063 / NRRL Y-11545) (Yeast).